The primary structure comprises 380 residues: Alcohol dehydrogenase-like 4 (380 aa).

Zn(2+) contacts are provided by Cys-47, Thr-49, His-70, Cys-100, Cys-103, Cys-106, Cys-114, and Cys-180. Positions 49 and 70 each coordinate an alcohol. Thr-49 provides a ligand contact to NAD(+). NAD(+)-binding positions include 205-210 (GLGAVG), Asp-229, Lys-234, 298-300 (LGV), Phe-325, and Arg-375.

Belongs to the zinc-containing alcohol dehydrogenase family. Class-III subfamily. As to quaternary structure, homodimer. Zn(2+) serves as cofactor.

The protein localises to the cytoplasm. The catalysed reaction is a primary alcohol + NAD(+) = an aldehyde + NADH + H(+). It carries out the reaction a secondary alcohol + NAD(+) = a ketone + NADH + H(+). The chain is Alcohol dehydrogenase-like 4 from Arabidopsis thaliana (Mouse-ear cress).